Reading from the N-terminus, the 707-residue chain is Ribosomal RNA large subunit methyltransferase K/L (707 aa).

The region spanning 44 to 155 is the THUMP domain; that stretch reads VIYNLCLWSR…NDILTVSFDL (112 aa).

Belongs to the methyltransferase superfamily. RlmKL family.

Its subcellular location is the cytoplasm. The enzyme catalyses guanosine(2445) in 23S rRNA + S-adenosyl-L-methionine = N(2)-methylguanosine(2445) in 23S rRNA + S-adenosyl-L-homocysteine + H(+). The catalysed reaction is guanosine(2069) in 23S rRNA + S-adenosyl-L-methionine = N(2)-methylguanosine(2069) in 23S rRNA + S-adenosyl-L-homocysteine + H(+). Specifically methylates the guanine in position 2445 (m2G2445) and the guanine in position 2069 (m7G2069) of 23S rRNA. The sequence is that of Ribosomal RNA large subunit methyltransferase K/L from Legionella pneumophila subsp. pneumophila (strain Philadelphia 1 / ATCC 33152 / DSM 7513).